We begin with the raw amino-acid sequence, 848 residues long: Leucine--tRNA ligase (848 aa).

The 'HIGH' region motif lies at 41-51; sequence PYPSGRIHMGH. The 'KMSKS' region motif lies at 619–623; sequence KMSKS. An ATP-binding site is contributed by K622.

The protein belongs to the class-I aminoacyl-tRNA synthetase family.

The protein localises to the cytoplasm. It carries out the reaction tRNA(Leu) + L-leucine + ATP = L-leucyl-tRNA(Leu) + AMP + diphosphate. The protein is Leucine--tRNA ligase of Roseobacter denitrificans (strain ATCC 33942 / OCh 114) (Erythrobacter sp. (strain OCh 114)).